Reading from the N-terminus, the 627-residue chain is Zinc cluster transcription factor acuM (627 aa).

Disordered stretches follow at residues 1–40, 129–148, 155–193, 225–258, 277–305, and 394–416; these read MGCR…PARP, NGTA…GTME, AEGD…RRKV, CHDE…FSNA, PDGT…QNSL, and AQPS…PSST. The span at 162–171 shows a compositional bias: polar residues; the sequence is MESGSKNTAS. Residues 197–225 constitute a DNA-binding region (zn(2)-C6 fungal-type); sequence CVYCRRSHMTCDSERPCTRCIKRNIGHLC. Positions 225 to 251 are enriched in basic and acidic residues; sequence CHDEPREPSKRARSEHEHSTAEEDGHS. Residues 286-305 are compositionally biased toward polar residues; sequence SSVSAVQHNTIPSSSAQNSL. Over residues 394 to 403 the composition is skewed to low complexity; sequence AQPSQPTQSQ. Residues 404 to 416 are compositionally biased toward polar residues; it reads PHQNDSVQGPSST.

Its subcellular location is the nucleus. Transcription factor that governs genes involved in reductive and siderophore-mediated iron acquisition, and carbon metabolism. Suppresses the expression of sreA and induces hapX to stimulate expression of genes involved in both reductive iron assimilation and siderophore-mediated iron uptake which is essential for the maximal virulence. Also regulates genes involved in gluconeogenesis. This chain is Zinc cluster transcription factor acuM, found in Aspergillus fumigatus (strain ATCC MYA-4609 / CBS 101355 / FGSC A1100 / Af293) (Neosartorya fumigata).